Here is a 1009-residue protein sequence, read N- to C-terminus: Lateral signaling target protein 2 homolog (1009 aa).

Disordered regions lie at residues 313 to 460, 497 to 629, and 777 to 905; these read PVGS…EEQL, ASED…KRCS, and MQRN…TATA. Composition is skewed to low complexity over residues 327–348, 364–398, and 406–427; these read SSTP…SSSG, QRNN…TPTA, and PSHS…HPPA. The span at 430–458 shows a compositional bias: acidic residues; sequence SDGDDEDEDEEEDEEEDELEDTEDDTDEE. At serine 541 the chain carries Phosphoserine. Positions 544–558 are enriched in basic and acidic residues; it reads SEPHRDQGETIKSTE. Residues 562 to 575 show a composition bias toward low complexity; sequence QQQQQQEQQTLQSS. Composition is skewed to basic residues over residues 576–601 and 609–627; these read RQRH…HHST and QPHH…GRKR. The segment covering 780–798 has biased composition (low complexity); it reads NNTIDNPSSSNTSSSSATT. Serine 807 carries the phosphoserine modification. The span at 822–878 shows a compositional bias: low complexity; it reads VHQQEQEMQQQQDHQQQQHQHQVQVQLQRQRNNSVGSNTPSSASSTSSSSEQNSPVS. Residues 917-977 form an FYVE-type zinc finger; that stretch reads DGKAPRCMSC…VCRDCYVREV (61 aa). Residues cysteine 923, cysteine 926, cysteine 939, cysteine 942, cysteine 947, cysteine 950, cysteine 969, and cysteine 972 each contribute to the Zn(2+) site.

This sequence belongs to the lst-2 family.

In terms of biological role, negative regulator of epidermal growth factor receptor (EGFR) signaling. In Drosophila persimilis (Fruit fly), this protein is Lateral signaling target protein 2 homolog.